We begin with the raw amino-acid sequence, 328 residues long: Telomere-binding protein cav (328 aa).

Residues arginine 107 to glutamate 320 are required for binding to Su(var)205. A disordered region spans residues aspartate 139 to proline 228. Polar residues-rich tracts occupy residues glutamine 144–serine 167 and alanine 180–glutamine 189. Short sequence motifs (su(var)205-binding Pro-containing repeat) lie at residues proline 228 to methionine 232 and proline 281 to glutamate 287. The span at isoleucine 295 to serine 319 shows a compositional bias: polar residues. The interval isoleucine 295–alanine 328 is disordered.

Interacts (via C-terminus) with Su(var)205 dimer (via hinge and chromoshadow domain) and with moi to form the terminin, telomere-capping, complex. Interacts with HP6, which is also part of the terminin complex.

The protein localises to the nucleus. The protein resides in the chromosome. It is found in the telomere. In terms of biological role, binds to chromosome ends in a sequence-dependent manner and is required for telomere capping. The chain is Telomere-binding protein cav from Drosophila erecta (Fruit fly).